Here is a 118-residue protein sequence, read N- to C-terminus: Small ribosomal subunit protein uS13 (118 aa).

Residues Gly94–Lys118 are disordered.

This sequence belongs to the universal ribosomal protein uS13 family. As to quaternary structure, part of the 30S ribosomal subunit. Forms a loose heterodimer with protein S19. Forms two bridges to the 50S subunit in the 70S ribosome.

Its function is as follows. Located at the top of the head of the 30S subunit, it contacts several helices of the 16S rRNA. In the 70S ribosome it contacts the 23S rRNA (bridge B1a) and protein L5 of the 50S subunit (bridge B1b), connecting the 2 subunits; these bridges are implicated in subunit movement. Contacts the tRNAs in the A and P-sites. This chain is Small ribosomal subunit protein uS13, found in Thiobacillus denitrificans (strain ATCC 25259 / T1).